We begin with the raw amino-acid sequence, 191 residues long: UPF0312 protein SO_3370 (191 aa).

An N-terminal signal peptide occupies residues 1-22 (MKKQLFSALIGASLFAPMAVSA).

Belongs to the UPF0312 family. Type 1 subfamily.

It localises to the periplasm. In Shewanella oneidensis (strain ATCC 700550 / JCM 31522 / CIP 106686 / LMG 19005 / NCIMB 14063 / MR-1), this protein is UPF0312 protein SO_3370.